The primary structure comprises 303 residues: tRNA pseudouridine synthase B (303 aa).

The active-site Nucleophile is the Asp46.

This sequence belongs to the pseudouridine synthase TruB family. Type 1 subfamily.

The enzyme catalyses uridine(55) in tRNA = pseudouridine(55) in tRNA. Its function is as follows. Responsible for synthesis of pseudouridine from uracil-55 in the psi GC loop of transfer RNAs. This is tRNA pseudouridine synthase B from Hydrogenovibrio crunogenus (strain DSM 25203 / XCL-2) (Thiomicrospira crunogena).